A 139-amino-acid polypeptide reads, in one-letter code: Putative nickel-responsive regulator (139 aa).

His79, His90, His92, and Cys98 together coordinate Ni(2+).

Belongs to the transcriptional regulatory CopG/NikR family. Ni(2+) serves as cofactor.

In terms of biological role, transcriptional regulator. The sequence is that of Putative nickel-responsive regulator from Anaeromyxobacter dehalogenans (strain 2CP-1 / ATCC BAA-258).